Reading from the N-terminus, the 1017-residue chain is DNA polymerase (1017 aa).

It belongs to the DNA polymerase type-B family. In terms of assembly, heterodimer with the terminal protein; this heterodimer binds to bp 9 to 18 of the genome. Forms a complex with viral pTP, DBP and hosts NFIA and POU2F1/OCT1 for initiation of replication.

It is found in the host nucleus. It carries out the reaction DNA(n) + a 2'-deoxyribonucleoside 5'-triphosphate = DNA(n+1) + diphosphate. In terms of biological role, eukaryotic-type DNA polymerase involved in viral genomic replication. DNA synthesis is protein primed, and acts in a strand displacement replication. Assembles in complex with viral pTP, DBP, host NFIA and host POU2F1/OCT1 on viral origin of replication. The polymerase covalently transfers dCMP onto pTP, thereby initiating complementary strand synthesis. The protein is DNA polymerase of Bovine adenovirus 2 (BAdV-2).